The following is a 379-amino-acid chain: ATPase ASNA1 homolog (379 aa).

The interval 1–20 is disordered; the sequence is MSEDESNSVSCSLSLESDGY. Over residues 7–18 the composition is skewed to low complexity; sequence NSVSCSLSLESD. ATP is bound at residue 46-53; that stretch reads KGGVGKTT. Aspartate 75 is a catalytic residue. 2 residues coordinate ATP: glutamate 246 and asparagine 273.

This sequence belongs to the arsA ATPase family. Homodimer.

It localises to the cytoplasm. The protein resides in the endoplasmic reticulum. Functionally, ATPase required for the post-translational delivery of tail-anchored (TA) proteins to the endoplasmic reticulum. Recognizes and selectively binds the transmembrane domain of TA proteins in the cytosol. This complex then targets to the endoplasmic reticulum by membrane-bound receptors, where the tail-anchored protein is released for insertion. This process is regulated by ATP binding and hydrolysis. ATP binding drives the homodimer towards the closed dimer state, facilitating recognition of newly synthesized TA membrane proteins. ATP hydrolysis is required for insertion. Subsequently, the homodimer reverts towards the open dimer state, lowering its affinity for the membrane-bound receptor, and returning it to the cytosol to initiate a new round of targeting. The polypeptide is ATPase ASNA1 homolog (Plasmodium falciparum (isolate 3D7)).